Consider the following 257-residue polypeptide: Dof zinc finger protein DOF5.3 (257 aa).

The disordered stretch occupies residues 23–50; sequence LSYSSNPTPLDNDQKKPSPATAVTRPQP. Positions 24–33 are enriched in polar residues; sequence SYSSNPTPLD. The Dof-type zinc finger occupies 55–109; that stretch reads LRCPRCDSTNTKFCYYNNYSLTQPRYFCKSCRRYWTKGGTLRNIPVGGGCRKNKR. Zn(2+)-binding residues include cysteine 57, cysteine 60, cysteine 82, and cysteine 85. The interval 104–127 is disordered; it reads CRKNKRSTSSAARSLRTTPEPASH. The segment covering 110 to 121 has biased composition (low complexity); sequence STSSAARSLRTT.

As to expression, the PEAR proteins (e.g. DOF2.4, DOF5.1, DOF3.2, DOF1.1, DOF5.6 and DOF5.3) form a short-range concentration gradient that peaks at protophloem sieve elements (PSE). Accumulates in the stele.

The protein resides in the nucleus. Functionally, transcription factor that binds specifically to a 5'-AA[AG]G-3' consensus core sequence. The PEAR proteins (e.g. DOF2.4, DOF5.1, DOF3.2, DOF1.1, DOF5.6 and DOF5.3) activate gene expression that promotes radial growth of protophloem sieve elements. The polypeptide is Dof zinc finger protein DOF5.3 (Arabidopsis thaliana (Mouse-ear cress)).